Here is a 290-residue protein sequence, read N- to C-terminus: Ribosomal RNA small subunit methyltransferase A (290 aa).

Residues asparagine 27, leucine 29, glycine 54, glutamate 75, aspartate 100, and asparagine 125 each coordinate S-adenosyl-L-methionine.

This sequence belongs to the class I-like SAM-binding methyltransferase superfamily. rRNA adenine N(6)-methyltransferase family. RsmA subfamily.

The protein resides in the cytoplasm. The enzyme catalyses adenosine(1518)/adenosine(1519) in 16S rRNA + 4 S-adenosyl-L-methionine = N(6)-dimethyladenosine(1518)/N(6)-dimethyladenosine(1519) in 16S rRNA + 4 S-adenosyl-L-homocysteine + 4 H(+). Functionally, specifically dimethylates two adjacent adenosines (A1518 and A1519) in the loop of a conserved hairpin near the 3'-end of 16S rRNA in the 30S particle. May play a critical role in biogenesis of 30S subunits. This is Ribosomal RNA small subunit methyltransferase A from Streptococcus pneumoniae (strain P1031).